Reading from the N-terminus, the 269-residue chain is Formamidopyrimidine-DNA glycosylase (269 aa).

The active-site Schiff-base intermediate with DNA is proline 2. The active-site Proton donor is glutamate 3. Lysine 57 (proton donor; for beta-elimination activity) is an active-site residue. DNA is bound by residues histidine 90, arginine 109, and lysine 150. The segment at 235–269 (QVYGKGGKPCPRCDNPLSEMKIGQRASVFCSECQK) adopts an FPG-type zinc-finger fold. Catalysis depends on arginine 259, which acts as the Proton donor; for delta-elimination activity.

Belongs to the FPG family. As to quaternary structure, monomer. The cofactor is Zn(2+).

It carries out the reaction Hydrolysis of DNA containing ring-opened 7-methylguanine residues, releasing 2,6-diamino-4-hydroxy-5-(N-methyl)formamidopyrimidine.. The enzyme catalyses 2'-deoxyribonucleotide-(2'-deoxyribose 5'-phosphate)-2'-deoxyribonucleotide-DNA = a 3'-end 2'-deoxyribonucleotide-(2,3-dehydro-2,3-deoxyribose 5'-phosphate)-DNA + a 5'-end 5'-phospho-2'-deoxyribonucleoside-DNA + H(+). In terms of biological role, involved in base excision repair of DNA damaged by oxidation or by mutagenic agents. Acts as a DNA glycosylase that recognizes and removes damaged bases. Has a preference for oxidized purines, such as 7,8-dihydro-8-oxoguanine (8-oxoG). Has AP (apurinic/apyrimidinic) lyase activity and introduces nicks in the DNA strand. Cleaves the DNA backbone by beta-delta elimination to generate a single-strand break at the site of the removed base with both 3'- and 5'-phosphates. This Photobacterium profundum (strain SS9) protein is Formamidopyrimidine-DNA glycosylase.